The sequence spans 271 residues: 3-methyl-2-oxobutanoate hydroxymethyltransferase 2 (271 aa).

Mg(2+) contacts are provided by aspartate 53 and aspartate 92. 3-methyl-2-oxobutanoate-binding positions include 53–54 (DS), aspartate 92, and lysine 120. Glutamate 122 is a Mg(2+) binding site. Glutamate 189 serves as the catalytic Proton acceptor.

This sequence belongs to the PanB family. In terms of assembly, homodecamer; pentamer of dimers. Mg(2+) serves as cofactor.

It localises to the cytoplasm. The enzyme catalyses 3-methyl-2-oxobutanoate + (6R)-5,10-methylene-5,6,7,8-tetrahydrofolate + H2O = 2-dehydropantoate + (6S)-5,6,7,8-tetrahydrofolate. Its pathway is cofactor biosynthesis; (R)-pantothenate biosynthesis; (R)-pantoate from 3-methyl-2-oxobutanoate: step 1/2. In terms of biological role, catalyzes the reversible reaction in which hydroxymethyl group from 5,10-methylenetetrahydrofolate is transferred onto alpha-ketoisovalerate to form ketopantoate. The protein is 3-methyl-2-oxobutanoate hydroxymethyltransferase 2 of Burkholderia lata (strain ATCC 17760 / DSM 23089 / LMG 22485 / NCIMB 9086 / R18194 / 383).